We begin with the raw amino-acid sequence, 727 residues long: Iron-sulfur clusters transporter ATM1, mitochondrial (727 aa).

The N-terminal 25 residues, 1-25 (MLIGGAQNRLYQLRTSNILGLLRTR), are a transit peptide targeting the mitochondrion. The Mitochondrial matrix segment spans residues 26–138 (SALRVGSKVE…PRGNTKVKVR (113 aa)). The disordered stretch occupies residues 87-107 (KSKLPNEDTAHNASEKNSKKT). Positions 90-107 (LPNEDTAHNASEKNSKKT) are enriched in basic and acidic residues. Residues 139-160 (VLLALALLIGAKVLNVQVPFFF) form a helical membrane-spanning segment. The ABC transmembrane type-1 domain occupies 139-429 (VLLALALLIG…LGSVYRELKQ (291 aa)). Topologically, residues 161-183 (KQIIDGMNVDWSDATVALPAALG) are mitochondrial intermembrane. Residues 184–207 (LTIMCYGLARFGAVLFGELRNAIF) traverse the membrane as a helical segment. Topologically, residues 208 to 256 (ARVAQNAIRNVSLQTFEHLMKLDLGWHLSRQTGGLTRAMDRGTKGISYV) are mitochondrial matrix. Residues 257 to 280 (LSAMVFHIIPITFEISVVCGILTY) traverse the membrane as a helical segment. Position 281 (Gln-281) is a topological domain, mitochondrial intermembrane. The chain crosses the membrane as a helical span at residues 282–302 (FGASFAGITFTTMLLYSIFTI). Residues 303-368 (RTTAWRTRFR…SQVKVAQSLA (66 aa)) lie on the Mitochondrial matrix side of the membrane. Residues 308–312 (RTRFR) and 371–374 (NSGQ) contribute to the glutathione site. Residues 369 to 387 (FLNSGQSLIFTTALTGMMY) form a helical membrane-spanning segment. At 388–402 (MGCTGVIGGDLTVGD) the chain is on the mitochondrial intermembrane side. A helical membrane pass occupies residues 403–424 (LVLINQLVFQLSVPLNFLGSVY). Gly-421 contributes to the glutathione binding site. The Mitochondrial matrix segment spans residues 425 to 727 (RELKQSLIDM…ETLEKLNKSI (303 aa)). The region spanning 465-701 (IKFENVTFGY…ENSLYKELWR (237 aa)) is the ABC transporter domain. ATP contacts are provided by residues Tyr-474 and 498–509 (GPSGSGKSTVLK).

Belongs to the ABC transporter superfamily. ABCB family. Heavy Metal importer (TC 3.A.1.210) subfamily. Homodimer.

It localises to the mitochondrion inner membrane. Functionally, performs an essential function in the generation of cytoplasmic iron-sulfur proteins by mediating the ATP-dependent export of Fe/S cluster precursors synthesized by NFS1 and other mitochondrial proteins. Hydrolyzes ATP. Binds glutathione and may function by transporting a glutathione-conjugated iron-sulfur compound. This Candida glabrata (strain ATCC 2001 / BCRC 20586 / JCM 3761 / NBRC 0622 / NRRL Y-65 / CBS 138) (Yeast) protein is Iron-sulfur clusters transporter ATM1, mitochondrial.